Consider the following 462-residue polypeptide: Sensor histidine kinase ZraS (462 aa).

At methionine 1 to glycine 14 the chain is on the cytoplasmic side. The helical transmembrane segment at leucine 15 to valine 35 threads the bilayer. Over arginine 36–methionine 197 the chain is Periplasmic. The helical transmembrane segment at valine 198 to phenylalanine 218 threads the bilayer. The Cytoplasmic portion of the chain corresponds to arginine 219 to glycine 462. Positions glycine 247–glycine 455 constitute a Histidine kinase domain. Histidine 250 is modified (phosphohistidine; by autocatalysis).

Post-translationally, autophosphorylated.

The protein localises to the cell inner membrane. It catalyses the reaction ATP + protein L-histidine = ADP + protein N-phospho-L-histidine.. With respect to regulation, activity of the ZraS/ZraR two-component system is repressed by the zinc-bound form of ZraP, which probably interacts with the periplasmic region of ZraS. Part of the Zra signaling pathway, an envelope stress response (ESR) system composed of the periplasmic accessory protein ZraP, the histidine kinase ZraS and the transcriptional regulator ZraR. The ZraPSR system contributes to antibiotic resistance and is important for membrane integrity in the presence of membrane-targeting biocides. ZraS is a member of the two-component regulatory system ZraS/ZraR. Functions as a membrane-associated sensor kinase that phosphorylates ZraR in response to high concentrations of Zn(2+) or Pb(2+) in the medium. The protein is Sensor histidine kinase ZraS (zraS) of Klebsiella oxytoca.